Reading from the N-terminus, the 499-residue chain is Alpha-internexin (499 aa).

Residues 1–87 (MSFGSEHYLC…SQAAARTNEY (87 aa)) are head. A Phosphoserine modification is found at S72. The segment at 88–129 (KIIRTNEKEQLQGLNDRFAVFIEKVHQLETQNRALEAELAAL) is coil 1A. One can recognise an IF rod domain in the interval 94–407 (EKEQLQGLND…KLLEGEETRF (314 aa)). The tract at residues 130–142 (RQRHAEPSRVGEL) is linker 1. Residues 143–238 (FQRELRDLRA…QVHDEEVAEL (96 aa)) form a coil 1B region. Position 219 is a phosphoserine (S219). A linker 2 region spans residues 239 to 262 (LATLQASSQAAAEVDVTVAKPDLT). The interval 263–408 (SALREIRAQY…LLEGEETRFS (146 aa)) is coil 2. Residue K290 is modified to N6-acetyllysine. At S335 the chain carries Phosphoserine. The tract at residues 409–499 (TSGLSISGLN…EETTISSQKI (91 aa)) is tail. The segment at 441–466 (STGLSLKKEEEEEEASKVASKKTSQI) is disordered. 2 positions are modified to phosphoserine: S469 and S496.

This sequence belongs to the intermediate filament family. Forms homodimers (in vitro). Forms heterodimers with NEFL, NEFM or NEFH (in vitro). Post-translationally, O-glycosylated. As to expression, found predominantly in adult CNS.

Its function is as follows. Class-IV neuronal intermediate filament that is able to self-assemble. It is involved in the morphogenesis of neurons. It may form an independent structural network without the involvement of other neurofilaments or it may cooperate with NEFL to form the filamentous backbone to which NEFM and NEFH attach to form the cross-bridges. May also cooperate with the neuronal intermediate filament protein PRPH to form filamentous networks. This is Alpha-internexin (INA) from Homo sapiens (Human).